A 187-amino-acid polypeptide reads, in one-letter code: UPF0301 protein GOX1459 (187 aa).

Belongs to the UPF0301 (AlgH) family.

This Gluconobacter oxydans (strain 621H) (Gluconobacter suboxydans) protein is UPF0301 protein GOX1459.